Here is a 226-residue protein sequence, read N- to C-terminus: Flagellar L-ring protein (226 aa).

The signal sequence occupies residues methionine 1–glycine 15. A lipid anchor (N-palmitoyl cysteine) is attached at cysteine 16. Cysteine 16 carries the S-diacylglycerol cysteine lipid modification.

It belongs to the FlgH family. In terms of assembly, the basal body constitutes a major portion of the flagellar organelle and consists of four rings (L,P,S, and M) mounted on a central rod.

Its subcellular location is the cell outer membrane. It localises to the bacterial flagellum basal body. Functionally, assembles around the rod to form the L-ring and probably protects the motor/basal body from shearing forces during rotation. This chain is Flagellar L-ring protein, found in Alteromonas mediterranea (strain DSM 17117 / CIP 110805 / LMG 28347 / Deep ecotype).